The following is a 451-amino-acid chain: Chromosomal replication initiator protein DnaA (451 aa).

Residues 1 to 72 are domain I, interacts with DnaA modulators; it reads MSLPTSLWDK…TELLDELSDT (72 aa). Positions 72–114 are domain II; the sequence is TPPQIRLQIGSRSTEMPTKNSHEPSHRKAAAPPAGTTISHTQA. Residues 81 to 90 are compositionally biased toward polar residues; the sequence is GSRSTEMPTK. The tract at residues 81 to 106 is disordered; that stretch reads GSRSTEMPTKNSHEPSHRKAAAPPAG. Positions 115 to 331 are domain III, AAA+ region; sequence NINSNFTFDS…GALKRVIANA (217 aa). Residues G159, G161, K162, and T163 each coordinate ATP. The segment at 332–451 is domain IV, binds dsDNA; that stretch reads HFTGQSITVD…YKNLMRILSG (120 aa).

It belongs to the DnaA family. As to quaternary structure, oligomerizes as a right-handed, spiral filament on DNA at oriC.

It localises to the cytoplasm. In terms of biological role, plays an essential role in the initiation and regulation of chromosomal replication. ATP-DnaA binds to the origin of replication (oriC) to initiate formation of the DNA replication initiation complex once per cell cycle. Binds the DnaA box (a 9 base pair repeat at the origin) and separates the double-stranded (ds)DNA. Forms a right-handed helical filament on oriC DNA; dsDNA binds to the exterior of the filament while single-stranded (ss)DNA is stabiized in the filament's interior. The ATP-DnaA-oriC complex binds and stabilizes one strand of the AT-rich DNA unwinding element (DUE), permitting loading of DNA polymerase. After initiation quickly degrades to an ADP-DnaA complex that is not apt for DNA replication. Binds acidic phospholipids. The chain is Chromosomal replication initiator protein DnaA from Coxiella burnetii (strain CbuK_Q154) (Coxiella burnetii (strain Q154)).